Here is a 360-residue protein sequence, read N- to C-terminus: GDSL esterase/lipase At1g06990 (360 aa).

The N-terminal stretch at 1-22 (MLIHVIIFMIITTMQFSTTCHA) is a signal peptide. 2 N-linked (GlcNAc...) asparagine glycosylation sites follow: N26 and N31. The active-site Nucleophile is S44. 3 N-linked (GlcNAc...) asparagine glycosylation sites follow: N73, N126, and N272. Active-site residues include D335 and H338.

The protein belongs to the 'GDSL' lipolytic enzyme family.

The protein resides in the secreted. In Arabidopsis thaliana (Mouse-ear cress), this protein is GDSL esterase/lipase At1g06990.